A 397-amino-acid chain; its full sequence is 1-deoxy-D-xylulose 5-phosphate reductoisomerase (397 aa).

Threonine 10, glycine 11, serine 12, isoleucine 13, glycine 36, asparagine 38, and asparagine 128 together coordinate NADPH. Lysine 129 is a binding site for 1-deoxy-D-xylulose 5-phosphate. Residue glutamate 130 coordinates NADPH. Aspartate 154 is a binding site for Mn(2+). Residues serine 155, glutamate 156, serine 180, and histidine 203 each contribute to the 1-deoxy-D-xylulose 5-phosphate site. Glutamate 156 contacts Mn(2+). Residue glycine 209 coordinates NADPH. Asparagine 221, lysine 222, and glutamate 225 together coordinate 1-deoxy-D-xylulose 5-phosphate. Residue glutamate 225 participates in Mn(2+) binding.

The protein belongs to the DXR family. It depends on Mg(2+) as a cofactor. The cofactor is Mn(2+).

The catalysed reaction is 2-C-methyl-D-erythritol 4-phosphate + NADP(+) = 1-deoxy-D-xylulose 5-phosphate + NADPH + H(+). Its pathway is isoprenoid biosynthesis; isopentenyl diphosphate biosynthesis via DXP pathway; isopentenyl diphosphate from 1-deoxy-D-xylulose 5-phosphate: step 1/6. Its function is as follows. Catalyzes the NADPH-dependent rearrangement and reduction of 1-deoxy-D-xylulose-5-phosphate (DXP) to 2-C-methyl-D-erythritol 4-phosphate (MEP). The protein is 1-deoxy-D-xylulose 5-phosphate reductoisomerase of Solibacter usitatus (strain Ellin6076).